The sequence spans 296 residues: tRNA dimethylallyltransferase (296 aa).

9-16 (GPTAVGKT) is a binding site for ATP. 11–16 (TAVGKT) serves as a coordination point for substrate. The interaction with substrate tRNA stretch occupies residues 34-37 (DSRQ).

This sequence belongs to the IPP transferase family. As to quaternary structure, monomer. Requires Mg(2+) as cofactor.

The catalysed reaction is adenosine(37) in tRNA + dimethylallyl diphosphate = N(6)-dimethylallyladenosine(37) in tRNA + diphosphate. Its function is as follows. Catalyzes the transfer of a dimethylallyl group onto the adenine at position 37 in tRNAs that read codons beginning with uridine, leading to the formation of N6-(dimethylallyl)adenosine (i(6)A). The polypeptide is tRNA dimethylallyltransferase (Chloroflexus aggregans (strain MD-66 / DSM 9485)).